The following is a 202-amino-acid chain: dITP/XTP pyrophosphatase (202 aa).

7–12 (TTNEGK) serves as a coordination point for substrate. Residues E37 and D66 each contribute to the Mg(2+) site. D66 acts as the Proton acceptor in catalysis. Residues S67, 155 to 158 (FGYD), K178, and 183 to 184 (HR) contribute to the substrate site.

The protein belongs to the HAM1 NTPase family. As to quaternary structure, homodimer. Requires Mg(2+) as cofactor.

It carries out the reaction XTP + H2O = XMP + diphosphate + H(+). It catalyses the reaction dITP + H2O = dIMP + diphosphate + H(+). The catalysed reaction is ITP + H2O = IMP + diphosphate + H(+). In terms of biological role, pyrophosphatase that catalyzes the hydrolysis of nucleoside triphosphates to their monophosphate derivatives, with a high preference for the non-canonical purine nucleotides XTP (xanthosine triphosphate), dITP (deoxyinosine triphosphate) and ITP. Seems to function as a house-cleaning enzyme that removes non-canonical purine nucleotides from the nucleotide pool, thus preventing their incorporation into DNA/RNA and avoiding chromosomal lesions. This chain is dITP/XTP pyrophosphatase, found in Aquifex aeolicus (strain VF5).